The chain runs to 183 residues: Heavy metal-associated isoprenylated plant protein 44 (183 aa).

The region spanning 50–113 (LQTVELKVRM…AVRRAGKRAE (64 aa)) is the HMA domain. A metal cation-binding residues include Cys-61 and Cys-64. Position 180 is a cysteine methyl ester (Cys-180). Residue Cys-180 is the site of S-farnesyl cysteine attachment. Residues 181 to 183 (RLM) constitute a propeptide, removed in mature form.

It belongs to the HIPP family.

Its function is as follows. Heavy-metal-binding protein. The polypeptide is Heavy metal-associated isoprenylated plant protein 44 (Arabidopsis thaliana (Mouse-ear cress)).